The primary structure comprises 754 residues: Aspartyl/asparaginyl beta-hydroxylase (754 aa).

The tract at residues 1-48 is disordered; it reads MAPRKNAKGGGGNSSSSSSGSPTGCTSGGSSSPGARRETKQGGLKNGR. Residues 1-56 are Cytoplasmic-facing; it reads MAPRKNAKGGGGNSSSSSSGSPTGCTSGGSSSPGARRETKQGGLKNGRKGGLSGSS. A compositionally biased stretch (low complexity) spans 14-34; that stretch reads SSSSSSGSPTGCTSGGSSSPG. Phosphoserine is present on Ser-15. The chain crosses the membrane as a helical; Signal-anchor for type II membrane protein span at residues 57-77; sequence FFTWFMVIALLGVWTSVAVVW. At 78–754 the chain is on the lumenal side; that stretch reads FDLVDYEEVL…PHQRRSLPAI (677 aa). Asn-96 carries an N-linked (GlcNAc...) asparagine glycan. Ca(2+) contacts are provided by Asp-109, Asp-111, Asp-113, Asp-115, and Asp-120. Disordered regions lie at residues 176–197 and 247–326; these read VYSE…ELQP and EQEN…KKKK. Basic and acidic residues-rich tracts occupy residues 261-284 and 309-318; these read DAER…DHAV and TNKKADEPGK. 5 TPR repeats span residues 337–370, 378–411, 450–483, 485–517, and 521–553; these read IKAE…YPQS, AQCE…PDAP, TALK…TPND, FAKV…GDPG, and GRFY…GHFA. N-linked (GlcNAc...) asparagine glycosylation is present at Asn-466. Residue Trp-621 coordinates 2-oxoglutarate. A disulfide bridge links Cys-637 with Cys-644. Position 664 (Ser-664) interacts with 2-oxoglutarate. Fe cation is bound at residue His-675. 684-686 is a 2-oxoglutarate binding site; the sequence is RMH. Asn-702 is a glycosylation site (N-linked (GlcNAc...) asparagine). His-721 serves as a coordination point for Fe cation. Arg-731 contacts 2-oxoglutarate.

The protein belongs to the aspartyl/asparaginyl beta-hydroxylase family. In terms of assembly, monomer. It depends on Fe cation as a cofactor. In terms of processing, might be processed to the 56 kDa (AA 289-754) or 52 kDa (AA 311-754) forms in the lumen of the endoplasmic reticulum.

Its subcellular location is the endoplasmic reticulum membrane. It catalyses the reaction L-aspartyl-[protein] + 2-oxoglutarate + O2 = 3-hydroxy-L-aspartyl-[protein] + succinate + CO2. In terms of biological role, specifically hydroxylates an Asp or Asn residue in certain epidermal growth factor-like (EGF) domains of a number of proteins. The chain is Aspartyl/asparaginyl beta-hydroxylase (ASPH) from Bos taurus (Bovine).